The chain runs to 1062 residues: Integrin alpha-8 (1062 aa).

Residues 1-35 form the signal peptide; the sequence is MSAGTHCGPPGNRAPPFARLCCVSAALGMLWSPAC. The Extracellular segment spans residues 36-1010; sequence LAFNLDVDKL…ATPNVSFSIP (975 aa). FG-GAP repeat units lie at residues 41 to 104, 121 to 182, 187 to 239, 252 to 305, 306 to 371, 372 to 430, and 434 to 497; these read DVDK…RSAQ, NGTK…AYAE, RNSN…IANY, KQTD…STDM, TFIQ…LLFQ, DPQV…GLHS, and QVLQ…LHPM. N-linked (GlcNAc...) asparagine glycosylation occurs at N80. A disulfide bridge links C95 with C105. N-linked (GlcNAc...) asparagine glycosylation is present at N121. The cysteines at positions 149 and 170 are disulfide-linked. N176 carries an N-linked (GlcNAc...) asparagine glycan. C186 and C199 are disulfide-bonded. N-linked (GlcNAc...) asparagine glycosylation is present at N238. Residues E274, T276, D278, and E282 each contribute to the Ca(2+) site. N301 and N310 each carry an N-linked (GlcNAc...) asparagine glycan. Residues D328, N330, D332, D336, D394, N396, D398, Y400, and D402 each contribute to the Ca(2+) site. The short motif at 454–456 is the Cell attachment site element; the sequence is RGD. Residues D458, D460, N462, Y464, and D466 each contribute to the Ca(2+) site. An N-linked (GlcNAc...) asparagine glycan is attached at N503. 2 cysteine pairs are disulfide-bonded: C506/C517 and C523/C579. Residues N600 and N604 are each glycosylated (N-linked (GlcNAc...) asparagine). Intrachain disulfides connect C640/C646 and C712/C725. N718, N736, N752, N779, N895, and N922 each carry an N-linked (GlcNAc...) asparagine glycan. Disulfide bonds link C866/C923 and C928/C933. An N-linked (GlcNAc...) asparagine glycan is attached at N1004. The chain crosses the membrane as a helical span at residues 1011-1031; the sequence is LWVIILAILLGLLVLAILTLA. Topologically, residues 1032 to 1062 are cytoplasmic; sequence LWKCGFFDRARPPQDEMTDREQLTSDKTPEA.

This sequence belongs to the integrin alpha chain family. In terms of assembly, heterodimer of an alpha and a beta subunit. The alpha subunit is composed of a heavy and a light chain linked by a disulfide bond. Alpha-8 associates with beta-1. As to expression, in brain, expressed in deep cortex, hippocampal CA1, basolateral amygdala and striatum. In kidney, expressed in glomerular mesengium (at protein level).

It is found in the membrane. The protein resides in the cell membrane. Its function is as follows. Integrin alpha-8/beta-1 functions in the genesis of kidney and probably of other organs by regulating the recruitment of mesenchymal cells into epithelial structures. It recognizes the sequence R-G-D in a wide array of ligands including TNC, FN1, SPP1 TGFB1, TGFB3 and VTN. NPNT is probably its functional ligand in kidney genesis. Neuronal receptor for TNC it mediates cell-cell interactions and regulates neurite outgrowth of sensory and motor neurons. This Mus musculus (Mouse) protein is Integrin alpha-8 (Itga8).